The chain runs to 228 residues: E3 ubiquitin-protein ligase RNF114 (228 aa).

The segment at 29–68 (CPVCLEVYEKPVQVPCGHVFCSACLQECLKPKKPVCGVCR) adopts an RING-type zinc-finger fold. Positions 91 and 94 each coordinate Zn(2+). The segment at 91–110 (CHGCRKKFFLSKIRSHVATC) adopts a C2HC RNF-type zinc-finger fold. The residue at position 102 (lysine 102) is an N6-acetyllysine. Positions 106 and 110 each coordinate Zn(2+). Lysine 112 carries the post-translational modification N6-acetyllysine.

As to quaternary structure, interacts with XAF1, the interaction increases XAF1 stability and proapoptotic effects, and may regulate IFN signaling. Autoubiquitinated. Polyubiquitinated in the presence of E2 enzymes UBE2D1, UBE2D2 and UBE2D3, but only monoubiquitinated in the presence of UBE2E1.

The protein localises to the cytoplasm. Its subcellular location is the nucleus. The enzyme catalyses S-ubiquitinyl-[E2 ubiquitin-conjugating enzyme]-L-cysteine + [acceptor protein]-L-lysine = [E2 ubiquitin-conjugating enzyme]-L-cysteine + N(6)-ubiquitinyl-[acceptor protein]-L-lysine.. Its pathway is protein modification; protein ubiquitination. Functionally, E3 ubiquitin-protein ligase that promotes the ubiquitination of various substrates. In turn, participates in the regulation of many biological processes including cell cycle, apoptosis, osteoclastogenesis as well as innate or adaptive immunity. Acts as negative regulator of NF-kappa-B-dependent transcription by promoting the ubiquitination and stabilization of the NF-kappa-B inhibitor TNFAIP3. May promote the ubiquitination of TRAF6 as well. Also acts as a negative regulator of T-cell activation. Inhibits cellular dsRNA responses and interferon production by targeting MAVS component for proteasomal degradation. Ubiquitinates the CDK inhibitor CDKN1A leading to its degradationand probably also CDKN1B and CDKN1C. This activity stimulates cell cycle G1-to-S phase transition and suppresses cellular senescence. May play a role in spermatogenesis. In Pan troglodytes (Chimpanzee), this protein is E3 ubiquitin-protein ligase RNF114 (RNF114).